The chain runs to 453 residues: Putative sodium-coupled neutral amino acid transporter 11 (453 aa).

The segment at 1-34 is disordered; that stretch reads MSYQQPQLRGPLQRETDPSDRESLVSGHEHGGKS. Positions 12 to 32 are enriched in basic and acidic residues; that stretch reads LQRETDPSDRESLVSGHEHGG. A run of 11 helical transmembrane segments spans residues 39–59, 66–86, 106–126, 152–172, 179–199, 222–242, 262–282, 299–319, 337–357, 359–379, and 399–419; these read AVFN…PYSM, LGIL…VLLI, GFPG…IAMI, FISR…PLSL, LGKI…VVVT, AIQA…CFLV, ILVS…TFTG, VTFG…IECF, VFHV…SLLI, CLGI…IFII, and MACV…VMAI.

Belongs to the amino acid/polyamine transporter 2 family. Widely expressed.

Its subcellular location is the membrane. Putative sodium-dependent amino acid/proton antiporter. The chain is Putative sodium-coupled neutral amino acid transporter 11 (Slc38a11) from Rattus norvegicus (Rat).